Consider the following 483-residue polypeptide: Glutamyl-tRNA(Gln) amidotransferase subunit A (483 aa).

Active-site charge relay system residues include K76 and S151. Catalysis depends on S175, which acts as the Acyl-ester intermediate.

The protein belongs to the amidase family. GatA subfamily. As to quaternary structure, heterotrimer of A, B and C subunits.

The enzyme catalyses L-glutamyl-tRNA(Gln) + L-glutamine + ATP + H2O = L-glutaminyl-tRNA(Gln) + L-glutamate + ADP + phosphate + H(+). Its function is as follows. Allows the formation of correctly charged Gln-tRNA(Gln) through the transamidation of misacylated Glu-tRNA(Gln) in organisms which lack glutaminyl-tRNA synthetase. The reaction takes place in the presence of glutamine and ATP through an activated gamma-phospho-Glu-tRNA(Gln). The protein is Glutamyl-tRNA(Gln) amidotransferase subunit A of Pseudomonas putida (strain GB-1).